A 339-amino-acid chain; its full sequence is Anthranilate phosphoribosyltransferase (339 aa).

5-phospho-alpha-D-ribose 1-diphosphate is bound by residues Gly81, Gly84–Asp85, Ser89, Asn91–Thr94, Lys109–Ser117, and Ala121. Gly81 contacts anthranilate. Ser93 contacts Mg(2+). Asn112 contacts anthranilate. Arg167 provides a ligand contact to anthranilate. Mg(2+)-binding residues include Asp226 and Glu227.

This sequence belongs to the anthranilate phosphoribosyltransferase family. In terms of assembly, homodimer. It depends on Mg(2+) as a cofactor.

The enzyme catalyses N-(5-phospho-beta-D-ribosyl)anthranilate + diphosphate = 5-phospho-alpha-D-ribose 1-diphosphate + anthranilate. It participates in amino-acid biosynthesis; L-tryptophan biosynthesis; L-tryptophan from chorismate: step 2/5. Its function is as follows. Catalyzes the transfer of the phosphoribosyl group of 5-phosphorylribose-1-pyrophosphate (PRPP) to anthranilate to yield N-(5'-phosphoribosyl)-anthranilate (PRA). The chain is Anthranilate phosphoribosyltransferase from Rhodopseudomonas palustris (strain BisA53).